An 84-amino-acid polypeptide reads, in one-letter code: U4-theraphotoxin-Hhn1b (84 aa).

The N-terminal stretch at 1–22 (MKVTLTAILTCAAVLVLHTTAA) is a signal peptide. A propeptide spanning residues 23 to 47 (EELEESQLMEVGMPDTELAAVDEER) is cleaved from the precursor. Disulfide bonds link Cys-51-Cys-65, Cys-55-Cys-76, and Cys-70-Cys-81.

The protein belongs to the neurotoxin 12 (Hwtx-2) family. 02 (Hwtx-2) subfamily. In terms of tissue distribution, expressed by the venom gland.

It is found in the secreted. Its function is as follows. Postsynaptic neurotoxin. The chain is U4-theraphotoxin-Hhn1b from Cyriopagopus hainanus (Chinese bird spider).